The primary structure comprises 734 residues: Photosystem I P700 chlorophyll a apoprotein A2 (734 aa).

The next 8 helical transmembrane spans lie at 46–69 (IFAS…FHVA), 135–158 (LYTG…LHLQ), 175–199 (LNHH…HVAI), 273–291 (VAHH…GLMY), 330–353 (IHFQ…QHMY), 369–395 (AALY…IFFI), 417–439 (AIIS…LYVH), and 517–535 (FLVH…LILV). [4Fe-4S] cluster contacts are provided by cysteine 559 and cysteine 568. 2 helical membrane-spanning segments follow: residues 575-596 (DFYL…YWHW) and 643-665 (LSVW…MFLI). 3 residues coordinate chlorophyll a: histidine 654, methionine 662, and tyrosine 670. Tryptophan 671 provides a ligand contact to phylloquinone. A helical transmembrane segment spans residues 707–727 (LVGLVHFSVGYIFTYAAFLIA).

This sequence belongs to the PsaA/PsaB family. As to quaternary structure, the PsaA/B heterodimer binds the P700 chlorophyll special pair and subsequent electron acceptors. PSI consists of a core antenna complex that captures photons, and an electron transfer chain that converts photonic excitation into a charge separation. The eukaryotic PSI reaction center is composed of at least 11 subunits. The cofactor is P700 is a chlorophyll a/chlorophyll a' dimer, A0 is one or more chlorophyll a, A1 is one or both phylloquinones and FX is a shared 4Fe-4S iron-sulfur center..

The protein localises to the plastid. The protein resides in the chloroplast thylakoid membrane. The catalysed reaction is reduced [plastocyanin] + hnu + oxidized [2Fe-2S]-[ferredoxin] = oxidized [plastocyanin] + reduced [2Fe-2S]-[ferredoxin]. In terms of biological role, psaA and PsaB bind P700, the primary electron donor of photosystem I (PSI), as well as the electron acceptors A0, A1 and FX. PSI is a plastocyanin-ferredoxin oxidoreductase, converting photonic excitation into a charge separation, which transfers an electron from the donor P700 chlorophyll pair to the spectroscopically characterized acceptors A0, A1, FX, FA and FB in turn. Oxidized P700 is reduced on the lumenal side of the thylakoid membrane by plastocyanin. The chain is Photosystem I P700 chlorophyll a apoprotein A2 from Pisum sativum (Garden pea).